The following is a 286-amino-acid chain: Formyltetrahydrofolate deformylase (286 aa).

One can recognise an ACT domain in the interval 8-88 (VLTLQCPEGI…MDWQLRERGQ (81 aa)). Aspartate 230 is an active-site residue.

Belongs to the PurU family.

The enzyme catalyses (6R)-10-formyltetrahydrofolate + H2O = (6S)-5,6,7,8-tetrahydrofolate + formate + H(+). The protein operates within purine metabolism; IMP biosynthesis via de novo pathway; formate from 10-formyl-5,6,7,8-tetrahydrofolate: step 1/1. Catalyzes the hydrolysis of 10-formyltetrahydrofolate (formyl-FH4) to formate and tetrahydrofolate (FH4). The polypeptide is Formyltetrahydrofolate deformylase (Corynebacterium sp. (strain P-1)).